A 507-amino-acid polypeptide reads, in one-letter code: Type II methyltransferase M.PstI (507 aa).

Belongs to the N(4)/N(6)-methyltransferase family. As to quaternary structure, monomer.

It catalyses the reaction a 2'-deoxyadenosine in DNA + S-adenosyl-L-methionine = an N(6)-methyl-2'-deoxyadenosine in DNA + S-adenosyl-L-homocysteine + H(+). Its function is as follows. A gamma subtype methylase that recognizes the double-stranded sequence 5'-CTGCAG-3', methylates A-5 on both strands, and protects the DNA from cleavage by the PstI endonuclease. The sequence is that of Type II methyltransferase M.PstI (pstIM) from Providencia stuartii.